Here is a 137-residue protein sequence, read N- to C-terminus: NTF2-related export protein (137 aa).

The NTF2 domain occupies 19–135 (ESKKFMDVYY…YKVKSDRFRY (117 aa)).

As to quaternary structure, preferentially binds Ran-GTP.

It localises to the nucleus. Functionally, stimulator of protein export for NES-containing proteins. Also plays a role in the nuclear export of U1 snRNA, tRNA, and mRNA. This is NTF2-related export protein (nxt-1) from Caenorhabditis elegans.